The sequence spans 160 residues: 2-C-methyl-D-erythritol 2,4-cyclodiphosphate synthase (160 aa).

Residues Asp-9 and His-11 each coordinate a divalent metal cation. 4-CDP-2-C-methyl-D-erythritol 2-phosphate-binding positions include 9–11 and 35–36; these read DVH and HS. His-43 is a binding site for a divalent metal cation. Residues 57–59, 62–66, 133–136, Phe-140, and Arg-143 contribute to the 4-CDP-2-C-methyl-D-erythritol 2-phosphate site; these read DIG, FPDTD, and TTTE.

The protein belongs to the IspF family. Homotrimer. A divalent metal cation is required as a cofactor.

It carries out the reaction 4-CDP-2-C-methyl-D-erythritol 2-phosphate = 2-C-methyl-D-erythritol 2,4-cyclic diphosphate + CMP. Its pathway is isoprenoid biosynthesis; isopentenyl diphosphate biosynthesis via DXP pathway; isopentenyl diphosphate from 1-deoxy-D-xylulose 5-phosphate: step 4/6. Involved in the biosynthesis of isopentenyl diphosphate (IPP) and dimethylallyl diphosphate (DMAPP), two major building blocks of isoprenoid compounds. Catalyzes the conversion of 4-diphosphocytidyl-2-C-methyl-D-erythritol 2-phosphate (CDP-ME2P) to 2-C-methyl-D-erythritol 2,4-cyclodiphosphate (ME-CPP) with a corresponding release of cytidine 5-monophosphate (CMP). The polypeptide is 2-C-methyl-D-erythritol 2,4-cyclodiphosphate synthase (Haemophilus ducreyi (strain 35000HP / ATCC 700724)).